A 171-amino-acid polypeptide reads, in one-letter code: Ribosome maturation factor RimM (171 aa).

A PRC barrel domain is found at 94–168 (NDEFYKDELI…MTIVPPEIVG (75 aa)).

This sequence belongs to the RimM family. In terms of assembly, binds ribosomal protein uS19.

The protein resides in the cytoplasm. In terms of biological role, an accessory protein needed during the final step in the assembly of 30S ribosomal subunit, possibly for assembly of the head region. Essential for efficient processing of 16S rRNA. May be needed both before and after RbfA during the maturation of 16S rRNA. It has affinity for free ribosomal 30S subunits but not for 70S ribosomes. This chain is Ribosome maturation factor RimM, found in Anaplasma phagocytophilum (strain HZ).